The following is a 261-amino-acid chain: Caveolae-associated protein 3 (261 aa).

The segment at 1-84 is interaction with CAVIN1; the sequence is MRESALERGP…SNTLAQLLAK (84 aa). Residues 20 to 78 form a leucine-zipper region; the sequence is VHAVTVVTLLEKLASMLETLRERQGGLARRQGGLAGSVRRIQSGLGALSRSHDTTSNTL. A phosphoserine mark is found at serine 62 and serine 70. A Glycyl lysine isopeptide (Lys-Gly) (interchain with G-Cter in SUMO2) cross-link involves residue lysine 128. The tract at residues 135-203 is interaction with CAV1; the sequence is ASAFQKAPEP…SGRKGPAAPP (69 aa). The tract at residues 139 to 261 is disordered; sequence QKAPEPLGPA…EALLQMESVA (123 aa). Acidic residues predominate over residues 158–170; that stretch reads LEAEVGESSDEEP. A phosphoserine mark is found at serine 165, serine 166, and serine 173. A compositionally biased stretch (pro residues) spans 200–212; sequence AAPPPTPVKPPRL. Over residues 213–231 the composition is skewed to low complexity; that stretch reads GPGRSAEAQPEAQPALEPT.

It belongs to the CAVIN family. As to quaternary structure, component of the CAVIN complex composed of CAVIN1, CAVIN2, CAVIN3 and CAVIN4. Interacts with PRKCD and with phosphatidylserine. Phosphatidylserine may form a bridge between PKC and PKC-binding partners and stabilize the binding. Interacts with PER2. Interacts with CAVIN1. Interacts (via leucine-zipper domain) with CAV1 in a cholesterol-sensitive manner. Interacts with EPS15L1. Post-translationally, in vitro, phosphorylated by PRKCD. Skeletal muscle, liver, stomach, lung, kidney and heart (at protein level). Strongly expressed in mammary and epithelial cells.

It localises to the cytoplasm. Its subcellular location is the membrane. The protein resides in the caveola. It is found in the cytosol. Its function is as follows. Regulates the traffic and/or budding of caveolae. Plays a role in caveola formation in a tissue-specific manner. Required for the formation of caveolae in smooth muscle but not in the lung and heart endothelial cells. Regulates the equilibrium between cell surface-associated and cell surface-dissociated caveolae by promoting the rapid release of caveolae from the cell surface. Plays a role in the regulation of the circadian clock. Modulates the period length and phase of circadian gene expression and also regulates expression and interaction of the core clock components PER1/2 and CRY1/2. This is Caveolae-associated protein 3 from Homo sapiens (Human).